We begin with the raw amino-acid sequence, 390 residues long: Transforming growth factor beta-1 proprotein (390 aa).

Positions 1–29 are cleaved as a signal peptide; sequence MPPSGLRLLPLLLPLLRLLVLTPGRPAAG. The interval 30–74 is straightjacket domain; that stretch reads LSTCKTIDMELVKRKRIEAIRGQILSKLRLSSPPSQGEVPPVPLP. Residues 75–271 are arm domain; it reads EAVLALYNST…ATPLERAQHL (197 aa). Residues Asn82, Asn136, and Asn176 are each glycosylated (N-linked (GlcNAc...) asparagine). The segment at 226 to 252 is bowtie tail; sequence DSKDNTLQVDINGFSSSRRGDLATIHG. A Cell attachment site motif is present at residues 244–246; sequence RGD. Cystine bridges form between Cys285–Cys294, Cys293–Cys356, Cys322–Cys387, and Cys326–Cys389.

This sequence belongs to the TGF-beta family. In terms of assembly, homodimer; disulfide-linked. Interacts with the serine proteases, HTRA1 and HTRA3: the interaction with either inhibits TGFB1-mediated signaling and the HTRA protease activity is required for this inhibition. May interact with THSD4; this interaction may lead to sequestration by FBN1 microfibril assembly and attenuation of TGFB signaling. Interacts with CD109, DPT and ASPN. Interacts with EFEMP2. Interacts with TSKU; the interaction contributes to regulation of the hair cycle. Interacts with TGFBR3. Homodimer; disulfide-linked. Interacts with transforming growth factor beta-1 (TGF-beta-1) chain; interaction is non-covalent and maintains TGF-beta-1 in a latent state; each latency-associated peptide (LAP) monomer interacts with TGF-beta-1 in the other monomer. Interacts with LTBP1; leading to regulation of TGF-beta-1 activation. Interacts with LRRC32/GARP; leading to regulation of TGF-beta-1 activation on the surface of activated regulatory T-cells (Tregs). Interacts with LRRC33/NRROS; leading to regulation of TGF-beta-1 activation in macrophages and microglia. Interacts (via cell attachment site) with integrins ITGAV and ITGB6 (ITGAV:ITGB6), leading to release of the active TGF-beta-1. Interacts with NREP; the interaction results in a decrease in TGFB1 autoinduction. Interacts with HSP90AB1; inhibits latent TGFB1 activation. As to quaternary structure, homodimer; disulfide-linked. Interacts with TGF-beta receptors (TGFBR1 and TGFBR2), leading to signal transduction. Post-translationally, transforming growth factor beta-1 proprotein: The precursor proprotein is cleaved in the Golgi apparatus by FURIN to form Transforming growth factor beta-1 (TGF-beta-1) and Latency-associated peptide (LAP) chains, which remain non-covalently linked, rendering TGF-beta-1 inactive. N-glycosylated. Deglycosylation leads to activation of Transforming growth factor beta-1 (TGF-beta-1); mechanisms triggering deglycosylation-driven activation of TGF-beta-1 are however unclear.

It localises to the secreted. The protein localises to the extracellular space. The protein resides in the extracellular matrix. Transforming growth factor beta-1 proprotein: Precursor of the Latency-associated peptide (LAP) and Transforming growth factor beta-1 (TGF-beta-1) chains, which constitute the regulatory and active subunit of TGF-beta-1, respectively. Its function is as follows. Required to maintain the Transforming growth factor beta-1 (TGF-beta-1) chain in a latent state during storage in extracellular matrix. Associates non-covalently with TGF-beta-1 and regulates its activation via interaction with 'milieu molecules', such as LTBP1, LRRC32/GARP and LRRC33/NRROS, that control activation of TGF-beta-1. Interaction with LRRC33/NRROS regulates activation of TGF-beta-1 in macrophages and microglia. Interaction with LRRC32/GARP controls activation of TGF-beta-1 on the surface of activated regulatory T-cells (Tregs). Interaction with integrins (ITGAV:ITGB6 or ITGAV:ITGB8) results in distortion of the Latency-associated peptide chain and subsequent release of the active TGF-beta-1. Functionally, multifunctional protein that regulates the growth and differentiation of various cell types and is involved in various processes, such as normal development, immune function, microglia function and responses to neurodegeneration. Activation into mature form follows different steps: following cleavage of the proprotein in the Golgi apparatus, Latency-associated peptide (LAP) and Transforming growth factor beta-1 (TGF-beta-1) chains remain non-covalently linked rendering TGF-beta-1 inactive during storage in extracellular matrix. At the same time, LAP chain interacts with 'milieu molecules', such as LTBP1, LRRC32/GARP and LRRC33/NRROS that control activation of TGF-beta-1 and maintain it in a latent state during storage in extracellular milieus. TGF-beta-1 is released from LAP by integrins (ITGAV:ITGB6 or ITGAV:ITGB8): integrin-binding to LAP stabilizes an alternative conformation of the LAP bowtie tail and results in distortion of the LAP chain and subsequent release of the active TGF-beta-1. Once activated following release of LAP, TGF-beta-1 acts by binding to TGF-beta receptors (TGFBR1 and TGFBR2), which transduce signal. While expressed by many cells types, TGF-beta-1 only has a very localized range of action within cell environment thanks to fine regulation of its activation by Latency-associated peptide chain (LAP) and 'milieu molecules'. Plays an important role in bone remodeling: acts as a potent stimulator of osteoblastic bone formation, causing chemotaxis, proliferation and differentiation in committed osteoblasts. Can promote either T-helper 17 cells (Th17) or regulatory T-cells (Treg) lineage differentiation in a concentration-dependent manner. At high concentrations, leads to FOXP3-mediated suppression of RORC and down-regulation of IL-17 expression, favoring Treg cell development. At low concentrations in concert with IL-6 and IL-21, leads to expression of the IL-17 and IL-23 receptors, favoring differentiation to Th17 cells. Stimulates sustained production of collagen through the activation of CREB3L1 by regulated intramembrane proteolysis (RIP). Mediates SMAD2/3 activation by inducing its phosphorylation and subsequent translocation to the nucleus. Positively regulates odontoblastic differentiation in dental papilla cells, via promotion of IPO7-mediated translocation of phosphorylated SMAD2 to the nucleus and subsequent transcription of target genes. Can induce epithelial-to-mesenchymal transition (EMT) and cell migration in various cell types. This Canis lupus familiaris (Dog) protein is Transforming growth factor beta-1 proprotein (TGFB1).